Consider the following 257-residue polypeptide: 3-methyl-2-oxobutanoate hydroxymethyltransferase (257 aa).

Mg(2+) is bound by residues Asp42 and Asp81. 3-methyl-2-oxobutanoate is bound by residues Asp42–Ser43, Asp81, and Lys110. Glu112 serves as a coordination point for Mg(2+). Catalysis depends on Glu176, which acts as the Proton acceptor.

It belongs to the PanB family. Homodecamer; pentamer of dimers. The cofactor is Mg(2+).

It localises to the cytoplasm. The enzyme catalyses 3-methyl-2-oxobutanoate + (6R)-5,10-methylene-5,6,7,8-tetrahydrofolate + H2O = 2-dehydropantoate + (6S)-5,6,7,8-tetrahydrofolate. Its pathway is cofactor biosynthesis; (R)-pantothenate biosynthesis; (R)-pantoate from 3-methyl-2-oxobutanoate: step 1/2. Catalyzes the reversible reaction in which hydroxymethyl group from 5,10-methylenetetrahydrofolate is transferred onto alpha-ketoisovalerate to form ketopantoate. This Pelagibacter ubique (strain HTCC1062) protein is 3-methyl-2-oxobutanoate hydroxymethyltransferase.